We begin with the raw amino-acid sequence, 184 residues long: GTP cyclohydrolase 1 (184 aa).

Residues cysteine 75, histidine 78, and cysteine 146 each coordinate Zn(2+).

This sequence belongs to the GTP cyclohydrolase I family. As to quaternary structure, homomer.

It carries out the reaction GTP + H2O = 7,8-dihydroneopterin 3'-triphosphate + formate + H(+). It participates in cofactor biosynthesis; 7,8-dihydroneopterin triphosphate biosynthesis; 7,8-dihydroneopterin triphosphate from GTP: step 1/1. This Finegoldia magna (strain ATCC 29328 / DSM 20472 / WAL 2508) (Peptostreptococcus magnus) protein is GTP cyclohydrolase 1.